The following is a 1361-amino-acid chain: Zinc finger protein GLI4 (1361 aa).

The interval 185–270 (SSFGHTPLLH…PQPPDHLTDL (86 aa)) is disordered. 2 stretches are compositionally biased toward polar residues: residues 198 to 208 (TFASRQQGALT) and 227 to 241 (NKVS…TVNQ). 5 consecutive C2H2-type zinc fingers follow at residues 289–314 (TNCH…NNDH), 322–349 (FVCR…MRRH), 355–379 (HKCT…LRSH), 385–410 (YVCD…NRTH), and 416–441 (YICK…KTVH). 6 disordered regions span residues 434–527 (RKHV…TNNI), 556–584 (STVS…GTAE), 647–720 (NERR…LPNL), 787–832 (NAGL…SMNS), 906–946 (QNRE…APGA), and 1134–1230 (DGLH…PKDN). Residues 475-502 (SGREHSDSVSRDQEHCLQTRTIKTEDNM) are compositionally biased toward basic and acidic residues. Residues 506–522 (SSPGGQSSCSSEPSPYG) are compositionally biased toward low complexity. Over residues 573 to 584 (QRIHSAETGTAE) the composition is skewed to basic and acidic residues. Residues 653-670 (TSSTLSSAYTSRRSSGIS) show a composition bias toward low complexity. Composition is skewed to polar residues over residues 672 to 695 (YFSS…SSAD) and 710 to 720 (EASQHSGLPNL). Over residues 805-821 (RASDPVRRTAGIDDKPL) the composition is skewed to basic and acidic residues. Polar residues-rich tracts occupy residues 913–939 (QNLQ…NTPE) and 1142–1164 (YTVQ…SGQA). Residues 1172-1183 (PRPPAAPHPPNR) show a composition bias toward pro residues.

Belongs to the GLI C2H2-type zinc-finger protein family.

The protein resides in the nucleus. Functionally, has an essential role in the early embryonic patterning of mesoderm and neuroectoderm. The sequence is that of Zinc finger protein GLI4 (gli4) from Xenopus laevis (African clawed frog).